The following is a 162-amino-acid chain: NAD(P)H-quinone oxidoreductase subunit N (162 aa).

The protein belongs to the complex I NdhN subunit family. In terms of assembly, NDH-1 can be composed of about 15 different subunits; different subcomplexes with different compositions have been identified which probably have different functions.

The protein localises to the cellular thylakoid membrane. It carries out the reaction a plastoquinone + NADH + (n+1) H(+)(in) = a plastoquinol + NAD(+) + n H(+)(out). The enzyme catalyses a plastoquinone + NADPH + (n+1) H(+)(in) = a plastoquinol + NADP(+) + n H(+)(out). NDH-1 shuttles electrons from an unknown electron donor, via FMN and iron-sulfur (Fe-S) centers, to quinones in the respiratory and/or the photosynthetic chain. The immediate electron acceptor for the enzyme in this species is believed to be plastoquinone. Couples the redox reaction to proton translocation, and thus conserves the redox energy in a proton gradient. Cyanobacterial NDH-1 also plays a role in inorganic carbon-concentration. This is NAD(P)H-quinone oxidoreductase subunit N from Trichormus variabilis (strain ATCC 29413 / PCC 7937) (Anabaena variabilis).